Here is a 395-residue protein sequence, read N- to C-terminus: MSKIIAINAGSSSLKFQLFEMPSETVLTKGLVERIGIADSVFTISVNGEKNTEVTDIPDHAVAVKMLLNKLTEFGIIKDLNEIDGIGHRVVHGGEKFSDSVLLTDETIKEIEDISELAPLHNPANIVGIKAFKEVLPNVPAVAVFDTAFHQTMPEQSYLYSLPYEYYEKFGIRKYGFHGTSHKYVTERAAELLGRPLKDLRLISCHLGNGASIAAVEGGKSIDTSMGFTPLAGVAMGTRSGNIDPALIPYIMEKTGQTADEVLNTLNKKSGLLGISGFSSDLRDIVEATKEGNERAETALEVFASRIHKYIGSYAARMSGVDAIIFTAGIGENSVEVRERVLRGLEFMGVYWDPALNNVRGEEAFISYPHSPVKVMIIPTDEEVMIARDVVRLAK.

Asparagine 8 is a binding site for Mg(2+). Lysine 15 is an ATP binding site. Arginine 89 serves as a coordination point for substrate. Catalysis depends on aspartate 146, which acts as the Proton donor/acceptor. ATP contacts are provided by residues 206-210 (HLGNG), 281-283 (DLR), and 329-333 (GIGEN). Position 382 (glutamate 382) interacts with Mg(2+).

It belongs to the acetokinase family. Homodimer. Mg(2+) is required as a cofactor. Mn(2+) serves as cofactor.

It is found in the cytoplasm. The enzyme catalyses acetate + ATP = acetyl phosphate + ADP. It functions in the pathway metabolic intermediate biosynthesis; acetyl-CoA biosynthesis; acetyl-CoA from acetate: step 1/2. With respect to regulation, induced by glucose excess, the induction may be mediated by CcpA transcriptional regulator. Functionally, catalyzes the formation of acetyl phosphate from acetate and ATP. Can also catalyze the reverse reaction. Appears to favor the formation of acetate. Involved in the secretion of excess carbohydrate. The polypeptide is Acetate kinase (Bacillus subtilis (strain 168)).